The following is a 587-amino-acid chain: Probable terpene synthase 12 (587 aa).

D338, D342, and E489 together coordinate Mg(2+). Positions 338–342 match the DDXXD motif motif; the sequence is DDVYD.

Belongs to the terpene synthase family. Mg(2+) serves as cofactor.

In terms of biological role, probable sesquiterpene synthase. The chain is Probable terpene synthase 12 (TPS12) from Ricinus communis (Castor bean).